We begin with the raw amino-acid sequence, 514 residues long: 2,3-bisphosphoglycerate-independent phosphoglycerate mutase (514 aa).

Mn(2+) is bound by residues Asp13 and Ser69. The active-site Phosphoserine intermediate is the Ser69. Substrate is bound by residues His128, 158–159, Arg189, Arg195, 263–266, and Lys336; these read RD and RADR. Mn(2+) contacts are provided by Asp402, His406, Asp443, His444, and His461.

It belongs to the BPG-independent phosphoglycerate mutase family. In terms of assembly, monomer. Requires Mn(2+) as cofactor.

It carries out the reaction (2R)-2-phosphoglycerate = (2R)-3-phosphoglycerate. The protein operates within carbohydrate degradation; glycolysis; pyruvate from D-glyceraldehyde 3-phosphate: step 3/5. In terms of biological role, catalyzes the interconversion of 2-phosphoglycerate and 3-phosphoglycerate. This is 2,3-bisphosphoglycerate-independent phosphoglycerate mutase from Akkermansia muciniphila (strain ATCC BAA-835 / DSM 22959 / JCM 33894 / BCRC 81048 / CCUG 64013 / CIP 107961 / Muc).